The following is a 491-amino-acid chain: 2,3-bisphosphoglycerate-independent phosphoglycerate mutase (491 aa).

Residues Asp-11 and Ser-61 each coordinate Mn(2+). Ser-61 functions as the Phosphoserine intermediate in the catalytic mechanism. Residues His-118, 147-148, Arg-177, Arg-183, 248-251, and Lys-320 contribute to the substrate site; these read RD and RSDR. Residues Asp-386, His-390, Asp-427, His-428, and His-445 each coordinate Mn(2+).

This sequence belongs to the BPG-independent phosphoglycerate mutase family. As to quaternary structure, monomer. Requires Mn(2+) as cofactor.

It catalyses the reaction (2R)-2-phosphoglycerate = (2R)-3-phosphoglycerate. Its pathway is carbohydrate degradation; glycolysis; pyruvate from D-glyceraldehyde 3-phosphate: step 3/5. Functionally, catalyzes the interconversion of 2-phosphoglycerate and 3-phosphoglycerate. In Sulfurimonas denitrificans (strain ATCC 33889 / DSM 1251) (Thiomicrospira denitrificans (strain ATCC 33889 / DSM 1251)), this protein is 2,3-bisphosphoglycerate-independent phosphoglycerate mutase.